Reading from the N-terminus, the 269-residue chain is 4-hydroxy-tetrahydrodipicolinate reductase (269 aa).

Residues 12–17 (GGSGRM), 102–104 (GTT), and 126–129 (SPNM) each bind NAD(+). His159 serves as the catalytic Proton donor/acceptor. His160 provides a ligand contact to (S)-2,3,4,5-tetrahydrodipicolinate. Lys163 acts as the Proton donor in catalysis. 169-170 (GT) contributes to the (S)-2,3,4,5-tetrahydrodipicolinate binding site.

It belongs to the DapB family.

The protein localises to the cytoplasm. The enzyme catalyses (S)-2,3,4,5-tetrahydrodipicolinate + NAD(+) + H2O = (2S,4S)-4-hydroxy-2,3,4,5-tetrahydrodipicolinate + NADH + H(+). It carries out the reaction (S)-2,3,4,5-tetrahydrodipicolinate + NADP(+) + H2O = (2S,4S)-4-hydroxy-2,3,4,5-tetrahydrodipicolinate + NADPH + H(+). Its pathway is amino-acid biosynthesis; L-lysine biosynthesis via DAP pathway; (S)-tetrahydrodipicolinate from L-aspartate: step 4/4. In terms of biological role, catalyzes the conversion of 4-hydroxy-tetrahydrodipicolinate (HTPA) to tetrahydrodipicolinate. The polypeptide is 4-hydroxy-tetrahydrodipicolinate reductase (Leptospira borgpetersenii serovar Hardjo-bovis (strain JB197)).